The primary structure comprises 110 residues: Insulin (110 aa).

A signal peptide spans 1–24; it reads MALWMRLLPLLALLALWAPAPTRA. Disulfide bonds link Cys-31-Cys-96, Cys-43-Cys-109, and Cys-95-Cys-100. Positions 57–87 are cleaved as a propeptide — c peptide; it reads EVEDLQVRDVELAGAPGEGGLQPLALEGALQ.

This sequence belongs to the insulin family. In terms of assembly, heterodimer of a B chain and an A chain linked by two disulfide bonds.

Its subcellular location is the secreted. Insulin decreases blood glucose concentration. It increases cell permeability to monosaccharides, amino acids and fatty acids. It accelerates glycolysis, the pentose phosphate cycle, and glycogen synthesis in liver. The protein is Insulin (INS) of Canis lupus familiaris (Dog).